We begin with the raw amino-acid sequence, 189 residues long: Ribonuclease HII (189 aa).

One can recognise an RNase H type-2 domain in the interval 1-189 (MIAGVDEAGR…IAALLKNNKK (189 aa)). A divalent metal cation-binding residues include Asp6, Glu7, and Asp98.

The protein belongs to the RNase HII family. Mn(2+) is required as a cofactor. The cofactor is Mg(2+).

The protein localises to the cytoplasm. The enzyme catalyses Endonucleolytic cleavage to 5'-phosphomonoester.. Endonuclease that specifically degrades the RNA of RNA-DNA hybrids. This is Ribonuclease HII from Dichelobacter nodosus (strain VCS1703A).